A 358-amino-acid polypeptide reads, in one-letter code: Isopentenyl-diphosphate delta-isomerase (358 aa).

R12–K13 serves as a coordination point for substrate. FMN-binding positions include A69–T71, S99, and N128. Residue Q158 coordinates substrate. E159 lines the Mg(2+) pocket. Residues K190, T220, G267–R269, and A288–G289 contribute to the FMN site.

Belongs to the IPP isomerase type 2 family. As to quaternary structure, homooctamer. Dimer of tetramers. It depends on FMN as a cofactor. The cofactor is NADPH. Requires Mg(2+) as cofactor.

It is found in the cytoplasm. The enzyme catalyses isopentenyl diphosphate = dimethylallyl diphosphate. Functionally, involved in the biosynthesis of isoprenoids. Catalyzes the 1,3-allylic rearrangement of the homoallylic substrate isopentenyl (IPP) to its allylic isomer, dimethylallyl diphosphate (DMAPP). This chain is Isopentenyl-diphosphate delta-isomerase, found in Listeria monocytogenes serotype 4b (strain CLIP80459).